The following is a 257-amino-acid chain: Type III pantothenate kinase (257 aa).

Asp-6–Val-13 is a binding site for ATP. Residues Tyr-102 and Gly-109–Arg-112 each bind substrate. Asp-111 serves as the catalytic Proton acceptor. Asp-131 serves as a coordination point for K(+). Thr-134 serves as a coordination point for ATP. Residue Thr-186 participates in substrate binding.

The protein belongs to the type III pantothenate kinase family. In terms of assembly, homodimer. NH4(+) serves as cofactor. K(+) is required as a cofactor.

It localises to the cytoplasm. It carries out the reaction (R)-pantothenate + ATP = (R)-4'-phosphopantothenate + ADP + H(+). It participates in cofactor biosynthesis; coenzyme A biosynthesis; CoA from (R)-pantothenate: step 1/5. Catalyzes the phosphorylation of pantothenate (Pan), the first step in CoA biosynthesis. In Leptospira interrogans serogroup Icterohaemorrhagiae serovar copenhageni (strain Fiocruz L1-130), this protein is Type III pantothenate kinase.